The following is an 834-amino-acid chain: Probable basic-leucine zipper transcription factor D (834 aa).

Residues 83–160 (NNNNMLNDHS…SNNNSSSEGE (78 aa)) are disordered. Residues 90–111 (DHSSSPMRVPNSSPSLYNNSIE) are compositionally biased toward polar residues. The segment covering 119–157 (DNSNNNNNNNNNINVNDINVNDINSNSTNNNESNNNSSS) has biased composition (low complexity). The stretch at 211-246 (SEQQQQQQQQQQQQQQQQQQQQQQQQQHQHLLQEHQ) forms a coiled coil. The segment at 378–405 (VVDPPTHNQEDERNVKKQRRLIKNRESA) is disordered. Residues 391–454 (NVKKQRRLIK…KQLAAQNSNS (64 aa)) form the bZIP domain. The basic motif stretch occupies residues 393–402 (KKQRRLIKNR). Residues 407–414 (LSRMRKKI) form a leucine-zipper region. Disordered stretches follow at residues 455–504 (NNNS…QQQS) and 550–712 (LSMS…KTPQ). A compositionally biased stretch (polar residues) spans 550–595 (LSMSDSESSPQKSLRLSSNHHSLPDGTFNTIPIDQQTTATTNTKSL). Low complexity-rich tracts occupy residues 616–651 (NNNN…NNNN) and 694–707 (TTTT…TTST).

The protein belongs to the bZIP family.

The protein resides in the nucleus. Probable transcriptional regulator. This is Probable basic-leucine zipper transcription factor D (bzpD) from Dictyostelium discoideum (Social amoeba).